We begin with the raw amino-acid sequence, 248 residues long: Mannose-binding protein C (248 aa).

The N-terminal stretch at 1–20 (MSLFPSLPLLLLSMVAASYS) is a signal peptide. In terms of domain architecture, Collagen-like spans 42-99 (GINGFPGKDGRDGTKGEKGEPGQGLRGLQGPPGKLGPPGNPGPSGSPGPKGQKGDPGK). Residues 43-113 (INGFPGKDGR…DSSLAASERK (71 aa)) are disordered. Position 47 is a 4-hydroxyproline (Pro-47). The span at 49–61 (KDGRDGTKGEKGE) shows a compositional bias: basic and acidic residues. 4-hydroxyproline occurs at positions 73, 79, 82, and 88. Over residues 75–87 (KLGPPGNPGPSGS) the composition is skewed to pro residues. Residues 93-102 (QKGDPGKSPD) show a composition bias toward basic and acidic residues. Positions 112–130 (RKALQTEMARIKKWLTFSL) form a coiled coil. A C-type lectin domain is found at 134–245 (VGNKFFLTNG…CSTSHLAVCE (112 aa)). 2 disulfide bridges follow: Cys-155/Cys-244 and Cys-222/Cys-236.

In terms of assembly, oligomeric complex of 3 or more homotrimers. Interacts with MASP1 and MASP2. Interacts with MEP1A and MEP1B and may inhibit their catalytic activity. Hydroxylation on proline residues within the sequence motif, GXPG, is most likely to be 4-hydroxy as this fits the requirement for 4-hydroxylation in vertebrates.

The protein resides in the secreted. Functionally, calcium-dependent lectin involved in innate immune defense. Binds mannose, fucose and N-acetylglucosamine on different microorganisms and activates the lectin complement pathway. Binds to late apoptotic cells, as well as to apoptotic blebs and to necrotic cells, but not to early apoptotic cells, facilitating their uptake by macrophages. This is Mannose-binding protein C (MBL2) from Gorilla gorilla gorilla (Western lowland gorilla).